The following is a 1140-amino-acid chain: DNA damage-binding protein 1 (1140 aa).

The tract at residues 13 to 356 is WD repeat beta-propeller A; that stretch reads TAVNGCVTGH…VVAMETFTNL (344 aa). The tract at residues 391–708 is WD repeat beta-propeller B; Interaction with CUL4A; sequence RNGIGIHEHA…LTIGTIDEIQ (318 aa). A WD repeat beta-propeller C region spans residues 709–1043; sequence KLHIRTVPLY…NGMIGLVTSL (335 aa).

This sequence belongs to the DDB1 family. In terms of assembly, component of the UV-DDB complex which includes DDB1 and DDB2. Component of numerous DCX (DDB1-CUL4-X-box) E3 ubiquitin-protein ligase complexes which consist of a core of DDB1, CUL4A or CUL4B and RBX1, and a substrate receptor, such as CRBN. DDB1 may recruit specific substrate targeting subunits to the DCX complex. These substrate targeting subunits are generally known as DCAF (DDB1- and CUL4-associated factor) or CDW (CUL4-DDB1-associated WD40-repeat) proteins.

It localises to the cytoplasm. Its subcellular location is the nucleus. It functions in the pathway protein modification; protein ubiquitination. Functionally, protein, which is both involved in DNA repair and protein ubiquitination, as part of the UV-DDB complex and DCX (DDB1-CUL4-X-box) complexes, respectively. Core component of the UV-DDB complex (UV-damaged DNA-binding protein complex), a complex that recognizes UV-induced DNA damage and recruit proteins of the nucleotide excision repair pathway (the NER pathway) to initiate DNA repair. The UV-DDB complex may recognize UV-induced DNA damage and recruit proteins of the nucleotide excision repair pathway (the NER pathway) to initiate DNA repair. Also functions as a component of numerous distinct DCX (DDB1-CUL4-X-box) E3 ubiquitin-protein ligase complexes which mediate the ubiquitination and subsequent proteasomal degradation of target proteins. The functional specificity of the DCX E3 ubiquitin-protein ligase complex is determined by the variable substrate recognition component recruited by DDB1. May play a role in the regulation of the circadian clock. The polypeptide is DNA damage-binding protein 1 (DDB1) (Gallus gallus (Chicken)).